A 197-amino-acid chain; its full sequence is Large ribosomal subunit protein uL11 (197 aa).

Belongs to the universal ribosomal protein uL11 family. As to quaternary structure, part of the ribosomal stalk of the 50S ribosomal subunit. Interacts with L10 and the large rRNA to form the base of the stalk. L10 forms an elongated spine to which L12 dimers bind in a sequential fashion forming a multimeric L10(L12)X complex. In terms of processing, one or more lysine residues are methylated.

Forms part of the ribosomal stalk which helps the ribosome interact with GTP-bound translation factors. This is Large ribosomal subunit protein uL11 from Mycoplasmopsis pulmonis (strain UAB CTIP) (Mycoplasma pulmonis).